The following is a 264-amino-acid chain: 3-methyl-2-oxobutanoate hydroxymethyltransferase (264 aa).

Mg(2+) contacts are provided by D45 and D84. Residues 45–46 (DS), D84, and K112 each bind 3-methyl-2-oxobutanoate. E114 provides a ligand contact to Mg(2+). E181 serves as the catalytic Proton acceptor.

Belongs to the PanB family. Homodecamer; pentamer of dimers. The cofactor is Mg(2+).

It localises to the cytoplasm. The enzyme catalyses 3-methyl-2-oxobutanoate + (6R)-5,10-methylene-5,6,7,8-tetrahydrofolate + H2O = 2-dehydropantoate + (6S)-5,6,7,8-tetrahydrofolate. The protein operates within cofactor biosynthesis; (R)-pantothenate biosynthesis; (R)-pantoate from 3-methyl-2-oxobutanoate: step 1/2. Catalyzes the reversible reaction in which hydroxymethyl group from 5,10-methylenetetrahydrofolate is transferred onto alpha-ketoisovalerate to form ketopantoate. This is 3-methyl-2-oxobutanoate hydroxymethyltransferase from Tolumonas auensis (strain DSM 9187 / NBRC 110442 / TA 4).